The chain runs to 628 residues: Putative lipase ATG15 (628 aa).

At 1–32 the chain is on the cytoplasmic side; the sequence is MLAAEKRRLLHKTRPVSASEKPGSIYPQRALY. A helical; Signal-anchor for type II membrane protein membrane pass occupies residues 33 to 53; it reads LLVCFSIATISLGYLHFIGAI. Topologically, residues 54-628 are lumenal; that stretch reads DIGRFGISSV…GYDGDVDDDQ (575 aa). N-linked (GlcNAc...) asparagine glycosylation is found at asparagine 261, asparagine 299, and asparagine 383. The Charge relay system role is filled by serine 401. Asparagine 518 carries an N-linked (GlcNAc...) asparagine glycan. Positions 540 to 605 are disordered; sequence HDDDVPDEPE…ISEPSESPKK (66 aa). The span at 562–586 shows a compositional bias: low complexity; that stretch reads PSSSTSDGKNNRISSTATTTISPTS. The span at 591 to 600 shows a compositional bias: polar residues; that stretch reads PTSSDISEPS.

The protein belongs to the AB hydrolase superfamily. Lipase family. In terms of assembly, binds to both phosphatidylinositol (PI) and phosphatidylinositol 3,5-bisphosphate (PIP2).

Its subcellular location is the endosome. The protein resides in the multivesicular body membrane. The protein localises to the prevacuolar compartment membrane. It catalyses the reaction a triacylglycerol + H2O = a diacylglycerol + a fatty acid + H(+). In terms of biological role, lipase which is essential for lysis of subvacuolar cytoplasm to vacuole targeted bodies and intravacuolar autophagic bodies. Involved in the lysis of intravacuolar multivesicular body (MVB) vesicles. The intravacuolar membrane disintegration by ATG15 is critical to life span extension. This is Putative lipase ATG15 (ATG15) from Scheffersomyces stipitis (strain ATCC 58785 / CBS 6054 / NBRC 10063 / NRRL Y-11545) (Yeast).